Consider the following 143-residue polypeptide: Actin-depolymerizing factor 2 (143 aa).

One can recognise an ADF-H domain in the interval 5 to 139 (ASGMAVHDDC…GLDVFRSRAG (135 aa)).

The protein belongs to the actin-binding proteins ADF family.

Its function is as follows. Actin-depolymerizing protein. Severs actin filaments (F-actin) and binds to actin monomers. The polypeptide is Actin-depolymerizing factor 2 (ADF2) (Petunia hybrida (Petunia)).